Reading from the N-terminus, the 185-residue chain is Ribosome maturation factor RimP (185 aa).

Residues 162 to 185 form a disordered region; the sequence is VRLERAADGAPERGGDRGDTEESR.

This sequence belongs to the RimP family.

The protein resides in the cytoplasm. In terms of biological role, required for maturation of 30S ribosomal subunits. This chain is Ribosome maturation factor RimP, found in Saccharopolyspora erythraea (strain ATCC 11635 / DSM 40517 / JCM 4748 / NBRC 13426 / NCIMB 8594 / NRRL 2338).